The primary structure comprises 297 residues: L-threonate dehydrogenase (297 aa).

NAD(+) contacts are provided by residues 3 to 31 (RNIG…VHAC) and threonine 97. Lysine 173 is a catalytic residue. Residue lysine 241 participates in NAD(+) binding.

It belongs to the HIBADH-related family. L-threonate dehydrogenase subfamily.

It carries out the reaction L-threonate + NAD(+) = 2-dehydro-L-erythronate + NADH + H(+). Functionally, catalyzes oxidation of L-threonate to 2-oxo-tetronate. Can use either NAD(+) or NADP(+) as cosubstrate, with a preference for NAD(+). The polypeptide is L-threonate dehydrogenase (Cupriavidus necator (strain ATCC 17699 / DSM 428 / KCTC 22496 / NCIMB 10442 / H16 / Stanier 337) (Ralstonia eutropha)).